The sequence spans 485 residues: E3 ubiquitin-protein ligase TRIM68 (485 aa).

The RING-type zinc finger occupies 16-61 (CPICMTFLREPVSISCGHTFCHSCLSGLWKLPGESQNLSYTCPLCR). Residues 93–134 (LKTDVCDLHKEQLTMFCKEDDMVTCEACKQSPEHEAHSVVPI) form a B box-type zinc finger. 4 residues coordinate Zn(2+): cysteine 98, histidine 101, cysteine 120, and histidine 126. A coiled-coil region spans residues 144–226 (KLQQALEHLR…EQEKGETASK (83 aa)). The 199-residue stretch at 285-483 (LKTDCRVLGL…TPLTICTLGG (199 aa)) folds into the B30.2/SPRY domain.

It belongs to the TRIM/RBCC family. Interacts with AR/androgen receptor (via ligand-binding domain). Interacts with KAT5/TIP60. In terms of processing, auto-ubiquitinated.

It localises to the cytoplasm. Its subcellular location is the perinuclear region. The protein localises to the nucleus. It catalyses the reaction S-ubiquitinyl-[E2 ubiquitin-conjugating enzyme]-L-cysteine + [acceptor protein]-L-lysine = [E2 ubiquitin-conjugating enzyme]-L-cysteine + N(6)-ubiquitinyl-[acceptor protein]-L-lysine.. The protein operates within protein modification; protein ubiquitination. Functionally, functions as a ubiquitin E3 ligase. Acts as a coactivator of androgen receptor (AR) depending on its ubiquitin ligase activity. The chain is E3 ubiquitin-protein ligase TRIM68 (Trim68) from Mus musculus (Mouse).